The primary structure comprises 24 residues: MKAIAVLKGXSEVTGVVRFEQQED.

The protein belongs to the Cu-Zn superoxide dismutase family. Homodimer. The cofactor is Cu cation. Requires Zn(2+) as cofactor.

The protein resides in the cytoplasm. It catalyses the reaction 2 superoxide + 2 H(+) = H2O2 + O2. Its function is as follows. Destroys radicals which are normally produced within the cells and which are toxic to biological systems. The polypeptide is Superoxide dismutase [Cu-Zn] (sod1) (Aquarana catesbeiana (American bullfrog)).